A 205-amino-acid polypeptide reads, in one-letter code: Small ribosomal subunit protein uS4 (205 aa).

A compositionally biased stretch (basic and acidic residues) spans 1 to 16 (MSKRESSKYKIDRRMG). Residues 1-46 (MSKRESSKYKIDRRMGENIWGRPKSPVNRREYGPGQHGQRRKGKLS) are disordered. An S4 RNA-binding domain is found at 94–157 (SRLDAIVYRA…KQLVTVLEAV (64 aa)).

Belongs to the universal ribosomal protein uS4 family. In terms of assembly, part of the 30S ribosomal subunit. Contacts protein S5. The interaction surface between S4 and S5 is involved in control of translational fidelity.

Its function is as follows. One of the primary rRNA binding proteins, it binds directly to 16S rRNA where it nucleates assembly of the body of the 30S subunit. With S5 and S12 plays an important role in translational accuracy. This chain is Small ribosomal subunit protein uS4, found in Rhizobium etli (strain ATCC 51251 / DSM 11541 / JCM 21823 / NBRC 15573 / CFN 42).